A 1127-amino-acid chain; its full sequence is Zinc finger protein basonuclin-2 (1127 aa).

The interval Ser44–Asp67 is disordered. The segment covering Val49–Asp67 has biased composition (basic and acidic residues). Residue Lys305 forms a Glycyl lysine isopeptide (Lys-Gly) (interchain with G-Cter in SUMO2) linkage. The interval Ser386–Ser450 is disordered. Positions Asn389–Ser400 are enriched in low complexity. Positions Pro403–Glu422 are enriched in polar residues. Glycyl lysine isopeptide (Lys-Gly) (interchain with G-Cter in SUMO2) cross-links involve residues Lys424, Lys444, and Lys449. The segment at Val469–His492 adopts a C2H2-type 1 zinc-finger fold. A Phosphoserine modification is found at Ser589. Lys669 participates in a covalent cross-link: Glycyl lysine isopeptide (Lys-Gly) (interchain with G-Cter in SUMO2). A disordered region spans residues Ile675 to Leu772. Over residues Asp676 to Asn689 the composition is skewed to acidic residues. Composition is skewed to basic and acidic residues over residues Met698–Asp708 and Glu747–Leu772. The segment at Lys861–His884 adopts a C2H2-type 2 zinc-finger fold. Residues Lys922 and Lys947 each participate in a glycyl lysine isopeptide (Lys-Gly) (interchain with G-Cter in SUMO2) cross-link. Disordered stretches follow at residues Leu955–Gly976 and Leu996–Gly1041. Acidic residues predominate over residues Ala1010–Gly1023. 2 consecutive C2H2-type zinc fingers follow at residues Ile1063 to His1086 and His1091 to His1118. A disordered region spans residues Ser1107–Asp1127.

As to expression, highly expressed in ovary, testis and kidney. Expressed at moderate levels in skin and small intestine, and at lower levels in lung. Trace amounts of expression detected in liver and colon. Not detected in brain, spleen or thymus.

It is found in the nucleus. Functionally, probable transcription factor specific for skin keratinocytes. May play a role in the differentiation of spermatozoa and oocytes. May also play an important role in early urinary-tract development. This is Zinc finger protein basonuclin-2 from Mus musculus (Mouse).